We begin with the raw amino-acid sequence, 387 residues long: Sharpin (387 aa).

The self-association stretch occupies residues 1–180 (MAPPAGGAAA…EREELAGSLA (180 aa)). The segment covering 122-132 (EGQNGSKSNSP) has biased composition (polar residues). The tract at residues 122–169 (EGQNGSKSNSPPALGPEACPVSLPSPPEASTLKGPPPEADLPRSPGNL) is disordered. Ser-165 carries the phosphoserine modification. The interaction with SHANK1 stretch occupies residues 175–310 (LAGSLARAIA…SAPREAPATG (136 aa)). A Ubiquitin-like domain is found at 219–288 (IRLQVTLEDA…PERSLASYGV (70 aa)). The disordered stretch occupies residues 305–349 (EAPATGPSPQHPQKMDGELGRLFPPSLGLPPGPQPAASSLPSPLQ). Position 312 is a phosphoserine (Ser-312). Residues 339 to 349 (PAASSLPSPLQ) show a composition bias toward low complexity. The RanBP2-type zinc-finger motif lies at 348–377 (LQPSWSCPSCTFINAPDRPGCEMCSTQRPC).

Monomer and homodimer. Component of the LUBAC complex (linear ubiquitin chain assembly complex) which consists of SHARPIN, RBCK1 and RNF31. LUBAC has a MW of approximately 600 kDa suggesting a heteromultimeric assembly of its subunits. Associates with the TNF-R1 signaling complex (TNF-RSC) in a stimulation-dependent manner. Interacts with EYA1, EYA2, SHANK1 and SHANK3 (via ANK repeats). As to expression, highly expressed in skeletal muscle and placenta and at lower levels in brain, heart, colon without mucosa, thymus, spleen, kidney, liver, small intestine, lung and peripheral blood leukocytes. Up-regulated in various tumor tissues such as kidney, liver, ovary and pancreas tumors.

The protein resides in the cytoplasm. Its subcellular location is the cytosol. It localises to the synapse. It participates in protein modification; protein ubiquitination. In terms of biological role, component of the LUBAC complex which conjugates linear polyubiquitin chains in a head-to-tail manner to substrates and plays a key role in NF-kappa-B activation and regulation of inflammation. LUBAC conjugates linear polyubiquitin to IKBKG and RIPK1 and is involved in activation of the canonical NF-kappa-B and the JNK signaling pathways. Linear ubiquitination mediated by the LUBAC complex interferes with TNF-induced cell death and thereby prevents inflammation. LUBAC is recruited to the TNF-R1 signaling complex (TNF-RSC) following polyubiquitination of TNF-RSC components by BIRC2 and/or BIRC3 and to conjugate linear polyubiquitin to IKBKG and possibly other components contributing to the stability of the complex. The LUBAC complex is also involved in innate immunity by conjugating linear polyubiquitin chains at the surface of bacteria invading the cytosol to form the ubiquitin coat surrounding bacteria. LUBAC is not able to initiate formation of the bacterial ubiquitin coat, and can only promote formation of linear polyubiquitins on pre-existing ubiquitin. The bacterial ubiquitin coat acts as an 'eat-me' signal for xenophagy and promotes NF-kappa-B activation. Together with OTULIN, the LUBAC complex regulates the canonical Wnt signaling during angiogenesis. The chain is Sharpin from Homo sapiens (Human).